We begin with the raw amino-acid sequence, 1020 residues long: MSTPTPPSSGRPKQPFPSSPGSSRRSKILGILVAIIAIAIFIVPVVVSTYTDFAWFRSVDYQGVFMNVIVTRLVLFVVFGLIGALISWLAAFLAYRARPDEIESLGTSSPLAEYRPLIRRNMRPFLVGIPLFVGVITGMIVQSNWRSVLLFLNGSNFGVHDPQFDKDLGFYAFNLPFLQMLVSTFSVLLILAFVINGIGHYLLGSITTGNPRVGEKASISTNARRQLAVIAGVWMLLKAVGYWFDRYGLLTRSHETFTGASYTDINAVLPAQIVLLVISIFVAAMFFVTIVLRDLRIPALAVALMVGSSLTVGLAWPAMLEQFSVNPNRAEKEREYIARNIEATRYAYGIGDDKVTYDRDWGASGDAASKEQKKAVADDSATLSNVRLLDPEVLTPTFTQQQQLRNFYGFPDELAIDRYEVDGKMRDFVVAARELNPNTLDGNQNDWINRHTVYTHGNGFVAAPSRKVDEVARDVGSARGGYPVYTVADLQSMQSGKQGGELKLDVKQPRIYFGPVIASSNQNNSDYAIVGNTEGEPLEYDTDASNYTYTGTGGVDVSNYFNRLMFSAHFESMNMLLTDRIGEGSKILYERDPRERVHKVAPWLTTDSKTYPIVIDGRVKWVVDGYTTLNNLPYSERIGLTDSTADAINPDGVSETQVVDNEVGYIRNSVKAVVDAYDGSVDLYAFDEADPVLKAWRGAFPGVVKPRSEISKELEDHLRYPEDMFKVQRELIAKYHVSDPGVFFQNDSFWSVPTDPTAPQDRQDNAQPPYYVVAADPETNKPSFQLITPFRGLRREFLAAHMSVGSDPDNYGKINVRVLPTGTQTLGPNQAQDTMMSSDEIARERTLLKGTNDLTNGNLLTLPVGDGQILYVEPVYSQRSGQDSAFPKLLRVLVSYNGQVGYAPTIAEALDQVGIKTSSTTDIQEIDGSVVDPTKDGGSGNKGDKGKDADKDKKSKDEQSSDAKGAAGKSDDKGTDTAPEQRVRDAMDKVNKTRESGTFEEFGKALDELDKAVQDLQSER.

Pro residues predominate over residues 1–18 (MSTPTPPSSGRPKQPFPS). Residues 1–23 (MSTPTPPSSGRPKQPFPSSPGSS) are disordered. A run of 7 helical transmembrane segments spans residues 28–48 (ILGILVAIIAIAIFIVPVVVS), 73–93 (LVLFVVFGLIGALISWLAAFL), 125–145 (FLVGIPLFVGVITGMIVQSNW), 175–195 (LPFLQMLVSTFSVLLILAFVI), 227–247 (LAVIAGVWMLLKAVGYWFDRY), 272–292 (QIVLLVISIFVAAMFFVTIVL), and 300–320 (LAVALMVGSSLTVGLAWPAML). The disordered stretch occupies residues 924–998 (QEIDGSVVDP…KVNKTRESGT (75 aa)). Basic and acidic residues-rich tracts occupy residues 942-961 (KGDKGKDADKDKKSKDEQSS) and 969-998 (KSDDKGTDTAPEQRVRDAMDKVNKTRESGT).

The protein belongs to the UPF0182 family.

It is found in the cell membrane. This Corynebacterium jeikeium (strain K411) protein is UPF0182 protein jk1603.